Reading from the N-terminus, the 431-residue chain is Histidine--tRNA ligase (431 aa).

The protein belongs to the class-II aminoacyl-tRNA synthetase family. In terms of assembly, homodimer.

The protein localises to the cytoplasm. The catalysed reaction is tRNA(His) + L-histidine + ATP = L-histidyl-tRNA(His) + AMP + diphosphate + H(+). In Ligilactobacillus salivarius (strain UCC118) (Lactobacillus salivarius), this protein is Histidine--tRNA ligase.